Consider the following 343-residue polypeptide: Farnesyl pyrophosphate synthase (343 aa).

The isopentenyl diphosphate site is built by Lys49, Arg52, and Gln87. Positions 94 and 98 each coordinate Mg(2+). Dimethylallyl diphosphate is bound at residue Arg103. An isopentenyl diphosphate-binding site is contributed by Arg104. Dimethylallyl diphosphate is bound by residues Lys191, Thr192, Gln230, Lys247, and Lys256.

This sequence belongs to the FPP/GGPP synthase family. Mg(2+) serves as cofactor. In terms of tissue distribution, expressed both in apical and sub-apical cells of glandular secretory trichomes.

It localises to the cytoplasm. Its subcellular location is the nucleus. It carries out the reaction isopentenyl diphosphate + dimethylallyl diphosphate = (2E)-geranyl diphosphate + diphosphate. The catalysed reaction is isopentenyl diphosphate + (2E)-geranyl diphosphate = (2E,6E)-farnesyl diphosphate + diphosphate. Its pathway is isoprenoid biosynthesis; farnesyl diphosphate biosynthesis; farnesyl diphosphate from geranyl diphosphate and isopentenyl diphosphate: step 1/1. It functions in the pathway sesquiterpene biosynthesis. The protein operates within isoprenoid biosynthesis; geranyl diphosphate biosynthesis; geranyl diphosphate from dimethylallyl diphosphate and isopentenyl diphosphate: step 1/1. Functionally, involved in the biosynthesis of the antimalarial endoperoxide artemisinin. Catalyzes the sequential condensation of isopentenyl pyrophosphate with the allylic pyrophosphates, dimethylallyl pyrophosphate, and then with the resultant geranylpyrophosphate to the ultimate product farnesyl pyrophosphate. Promotes anti-malarial and antimicrobial (toward Gram-positive bacteria B.subtilis and S.aureus) activities of plant crude extract probably by triggering artemisinin levels. This chain is Farnesyl pyrophosphate synthase, found in Artemisia annua (Sweet wormwood).